The primary structure comprises 579 residues: YTH domain-containing family protein 2 (579 aa).

Positions 1–45 (MSASSLLEQRPKGQGNKVQNGSVHQKDGLNDDDFEPYLSPQARPN) are disordered. N-acetylserine is present on S2. 6 positions are modified to phosphoserine: S2, S4, S5, S22, S39, and S196. Residues 2 to 384 (SASSLLEQRP…QAGSGSTPSE (383 aa)) form a localization to mRNA processing bodies (P-bodies) region. Residues 247 to 387 (AKQQPKLKTK…SGSTPSEPHP (141 aa)) form a disordered region. Residues 291–316 (ALVQNIGQPTQGSPQHVGQQANNSPP) are compositionally biased toward polar residues. The span at 337-349 (AQLSVQQQAAQPT) shows a compositional bias: low complexity. S359 bears the Phosphoserine mark. The span at 359 to 371 (SGFGHNGVDGNGV) shows a compositional bias: gly residues. The span at 372–383 (GQSQAGSGSTPS) shows a compositional bias: polar residues. The tract at residues 385-579 (PHPVLEKLRS…VKKERQGRGK (195 aa)) is interaction with m6A-containing mRNAs. The residue at position 394 (S394) is a Phosphoserine. The 135-residue stretch at 410-544 (GRVFIIKSYS…EKAKQVLKII (135 aa)) folds into the YTH domain. Residues 416–418 (KSY), D422, 432–433 (WC), N462, W486, and W491 each bind RNA.

The protein belongs to the YTHDF family. YTHDF2 subfamily. As to quaternary structure, interacts with CNOT1; interaction is direct and promotes recruitment of the CCR4-NOT complex. Interacts with YTHDF3. Interacts with RIDA/HRSP12; interaction leads to recruitment of the ribonuclease P/MRP complex. Post-translationally, ubiquitinated by the SCF(SKP2) complex, leading to its degradation.

Its subcellular location is the cytoplasm. The protein localises to the cytosol. The protein resides in the P-body. It is found in the stress granule. It localises to the nucleus. Specifically recognizes and binds N6-methyladenosine (m6A)-containing RNAs, and regulates their stability. M6A is a modification present at internal sites of mRNAs and some non-coding RNAs and plays a role in mRNA stability and processing. Acts as a regulator of mRNA stability by promoting degradation of m6A-containing mRNAs via interaction with the CCR4-NOT and ribonuclease P/MRP complexes, depending on the context. The YTHDF paralogs (YTHDF1, YTHDF2 and YTHDF3) share m6A-containing mRNAs targets and act redundantly to mediate mRNA degradation and cellular differentiation. M6A-containing mRNAs containing a binding site for RIDA/HRSP12 (5'-GGUUC-3') are preferentially degraded by endoribonucleolytic cleavage: cooperative binding of RIDA/HRSP12 and YTHDF2 to transcripts leads to recruitment of the ribonuclease P/MRP complex. Other m6A-containing mRNAs undergo deadenylation via direct interaction between YTHDF2 and CNOT1, leading to recruitment of the CCR4-NOT and subsequent deadenylation of m6A-containing mRNAs. Required maternally to regulate oocyte maturation: probably acts by binding to m6A-containing mRNAs, thereby regulating maternal transcript dosage during oocyte maturation, which is essential for the competence of oocytes to sustain early zygotic development. Also required during spermatogenesis: regulates spermagonial adhesion by promoting degradation of m6A-containing transcripts coding for matrix metallopeptidases. Also involved in hematopoietic stem cells specification by binding to m6A-containing mRNAs, leading to promote their degradation. Also acts as a regulator of neural development by promoting m6A-dependent degradation of neural development-related mRNA targets. Inhibits neural specification of induced pluripotent stem cells by binding to methylated neural-specific mRNAs and promoting their degradation, thereby restraining neural differentiation. Regulates circadian regulation of hepatic lipid metabolism: acts by promoting m6A-dependent degradation of PPARA transcripts. Regulates the innate immune response to infection by inhibiting the type I interferon response: acts by binding to m6A-containing IFNB transcripts and promoting their degradation. May also act as a promoter of cap-independent mRNA translation following heat shock stress: upon stress, relocalizes to the nucleus and specifically binds mRNAs with some m6A methylation mark at their 5'-UTR, protecting demethylation of mRNAs by FTO, thereby promoting cap-independent mRNA translation. Regulates mitotic entry by promoting the phase-specific m6A-dependent degradation of WEE1 transcripts. Promotes formation of phase-separated membraneless compartments, such as P-bodies or stress granules, by undergoing liquid-liquid phase separation upon binding to mRNAs containing multiple m6A-modified residues: polymethylated mRNAs act as a multivalent scaffold for the binding of YTHDF proteins, juxtaposing their disordered regions and thereby leading to phase separation. The resulting mRNA-YTHDF complexes then partition into different endogenous phase-separated membraneless compartments, such as P-bodies, stress granules or neuronal RNA granules. May also recognize and bind RNAs modified by C5-methylcytosine (m5C) and act as a regulator of rRNA processing. In Macaca fascicularis (Crab-eating macaque), this protein is YTH domain-containing family protein 2.